The primary structure comprises 322 residues: Ferredoxin--NADP reductase (322 aa).

FAD is bound by residues aspartate 34, glutamine 42, tyrosine 47, valine 87, phenylalanine 120, aspartate 279, and threonine 320.

Belongs to the ferredoxin--NADP reductase type 2 family. Homodimer. FAD serves as cofactor.

The catalysed reaction is 2 reduced [2Fe-2S]-[ferredoxin] + NADP(+) + H(+) = 2 oxidized [2Fe-2S]-[ferredoxin] + NADPH. This is Ferredoxin--NADP reductase from Streptococcus gordonii (strain Challis / ATCC 35105 / BCRC 15272 / CH1 / DL1 / V288).